A 508-amino-acid polypeptide reads, in one-letter code: Photosystem II CP47 reaction center protein (508 aa).

The next 6 membrane-spanning stretches (helical) occupy residues 21–36 (SVHI…WAGS), 101–115 (IVFS…IWHW), 140–156 (GIHL…FGAF), 203–218 (IAAG…FHLS), 237–252 (VLSS…AFVV), and 457–472 (SFAL…HGAR).

Belongs to the PsbB/PsbC family. PsbB subfamily. In terms of assembly, PSII is composed of 1 copy each of membrane proteins PsbA, PsbB, PsbC, PsbD, PsbE, PsbF, PsbH, PsbI, PsbJ, PsbK, PsbL, PsbM, PsbT, PsbX, PsbY, PsbZ, Psb30/Ycf12, at least 3 peripheral proteins of the oxygen-evolving complex and a large number of cofactors. It forms dimeric complexes. It depends on Binds multiple chlorophylls. PSII binds additional chlorophylls, carotenoids and specific lipids. as a cofactor.

Its subcellular location is the plastid. The protein resides in the chloroplast thylakoid membrane. One of the components of the core complex of photosystem II (PSII). It binds chlorophyll and helps catalyze the primary light-induced photochemical processes of PSII. PSII is a light-driven water:plastoquinone oxidoreductase, using light energy to abstract electrons from H(2)O, generating O(2) and a proton gradient subsequently used for ATP formation. The protein is Photosystem II CP47 reaction center protein of Panax ginseng (Korean ginseng).